A 484-amino-acid chain; its full sequence is Serine/threonine-protein kinase RIO1 (484 aa).

Residues 76-402 (ADLNGCLSTG…EFDNADHECS (327 aa)) form the Protein kinase domain. Lysine 125 and leucine 198 together coordinate ATP. Aspartate 244 (proton acceptor) is an active-site residue. Asparagine 249 and aspartate 261 together coordinate Mg(2+). The active-site 4-aspartylphosphate intermediate is the aspartate 261. Residues 398 to 484 (DHECSSGTEE…KLVKKTKSKK (87 aa)) are disordered. Serine 402, serine 403, serine 409, serine 416, serine 417, and serine 419 each carry phosphoserine; by CK2. Positions 403–484 (SGTEEFSDDE…KLVKKTKSKK (82 aa)) are interaction with CKA2. Over residues 407–434 (EFSDDEEDGSSGSEEDDEEEGEYYDDDE) the composition is skewed to acidic residues. Residues 440 to 484 (GKKHEDKDLKKLRKQEAKDAKREKRKTKVKKHIKKKLVKKTKSKK) form an association with (pre-)40S ribosomal subunit region. A compositionally biased stretch (basic and acidic residues) spans 442–461 (KHEDKDLKKLRKQEAKDAKR). Residues 462–484 (EKRKTKVKKHIKKKLVKKTKSKK) show a composition bias toward basic residues.

It belongs to the protein kinase superfamily. RIO-type Ser/Thr kinase family. As to quaternary structure, interacts with CKA2. Requires Mg(2+) as cofactor. In terms of processing, autophosphorylated. Phosphorylated by casein kinase II (CK2). Phosphorylation by CK2 stimulates RIO1 kinase activity and targets it for degradation at the G1/S transition of the cell cycle.

The protein localises to the cytoplasm. It catalyses the reaction L-seryl-[protein] + ATP = O-phospho-L-seryl-[protein] + ADP + H(+). The enzyme catalyses L-threonyl-[protein] + ATP = O-phospho-L-threonyl-[protein] + ADP + H(+). It carries out the reaction ATP + H2O = ADP + phosphate + H(+). Functionally, required for the final endonucleolytic cleavage at site D converting 20S pre-rRNA into the mature 18S rRNA. Required for the final steps of cytoplasmic maturation of the 40S ribosomal subunit. The association with the very late 40S subunit intermediate seems to follow RIO2 association with precursors of the 40S subunit and may involve a translation-like checkpoint point cycle preceeding the binding to the 60S ribosomal subunit. Despite the protein kinase domain is proposed to act predominantly as an ATPase. The catalytic activity regulates its dynamic association with the 40S subunit. Has a role in the cell cycle where it is required for entrance into S-phase and in the control of the onset of anaphase. Appears to also be involved in the maintenance of chromosome stability and correct mitotic segregation. The sequence is that of Serine/threonine-protein kinase RIO1 (RIO1) from Saccharomyces cerevisiae (strain ATCC 204508 / S288c) (Baker's yeast).